We begin with the raw amino-acid sequence, 64 residues long: Prokaryotic ubiquitin-like protein Pup (64 aa).

The tract at residues M1–D38 is disordered. The interval S21–Y58 is ARC ATPase binding. A coiled-coil region spans residues A23–E52. The residue at position 64 (Q64) is a Deamidated glutamine. An Isoglutamyl lysine isopeptide (Gln-Lys) (interchain with K-? in acceptor proteins) cross-link involves residue Q64.

It belongs to the prokaryotic ubiquitin-like protein family. As to quaternary structure, strongly interacts with the proteasome-associated ATPase ARC through a hydrophobic interface; the interacting region of Pup lies in its C-terminal half. There is one Pup binding site per ARC hexamer ring. In terms of processing, is modified by deamidation of its C-terminal glutamine to glutamate by the deamidase Dop, a prerequisite to the subsequent pupylation process.

Its pathway is protein degradation; proteasomal Pup-dependent pathway. Functionally, protein modifier that is covalently attached to lysine residues of substrate proteins, thereby targeting them for proteasomal degradation. The tagging system is termed pupylation. This chain is Prokaryotic ubiquitin-like protein Pup, found in Mycolicibacterium gilvum (strain PYR-GCK) (Mycobacterium gilvum (strain PYR-GCK)).